The following is a 496-amino-acid chain: Lysine--tRNA ligase (496 aa).

Residues glutamate 409 and glutamate 416 each contribute to the Mg(2+) site.

This sequence belongs to the class-II aminoacyl-tRNA synthetase family. As to quaternary structure, homodimer. Mg(2+) serves as cofactor.

It is found in the cytoplasm. It catalyses the reaction tRNA(Lys) + L-lysine + ATP = L-lysyl-tRNA(Lys) + AMP + diphosphate. In Streptococcus suis (strain 05ZYH33), this protein is Lysine--tRNA ligase.